Here is a 1092-residue protein sequence, read N- to C-terminus: Isoleucine--tRNA ligase (1092 aa).

Positions 53–63 (PFANGLPHYGH) match the 'HIGH' region motif. The 'KMSKS' region signature appears at 613–617 (KLSKR). An ATP-binding site is contributed by K616.

It belongs to the class-I aminoacyl-tRNA synthetase family. IleS type 2 subfamily. As to quaternary structure, monomer. Requires Zn(2+) as cofactor.

Its subcellular location is the cytoplasm. It catalyses the reaction tRNA(Ile) + L-isoleucine + ATP = L-isoleucyl-tRNA(Ile) + AMP + diphosphate. In terms of biological role, catalyzes the attachment of isoleucine to tRNA(Ile). As IleRS can inadvertently accommodate and process structurally similar amino acids such as valine, to avoid such errors it has two additional distinct tRNA(Ile)-dependent editing activities. One activity is designated as 'pretransfer' editing and involves the hydrolysis of activated Val-AMP. The other activity is designated 'posttransfer' editing and involves deacylation of mischarged Val-tRNA(Ile). The polypeptide is Isoleucine--tRNA ligase (Rickettsia peacockii (strain Rustic)).